The chain runs to 256 residues: Extracellular serine-rich protein ARB_03024 (256 aa).

A signal peptide spans 1–19 (MVATKSVLSAVALAGVAAA). The interval 135-235 (KIVPQSGSPT…TPTASPGAAA (101 aa)) is disordered. A compositionally biased stretch (gly residues) spans 149-159 (GTLGGSGGSGG). 2 stretches are compositionally biased toward low complexity: residues 160–204 (SSSS…QSTP) and 215–235 (PSATGSGSHSSTPTASPGAAA). A lipid anchor (GPI-anchor amidated alanine) is attached at A233. A propeptide spans 234–256 (AAGLKGSAVLAGVVALGAWIGLL) (removed in mature form).

Its subcellular location is the cell membrane. It localises to the secreted. This is Extracellular serine-rich protein ARB_03024 from Arthroderma benhamiae (strain ATCC MYA-4681 / CBS 112371) (Trichophyton mentagrophytes).